A 662-amino-acid polypeptide reads, in one-letter code: Acetyl-coenzyme A synthetase (662 aa).

CoA contacts are provided by residues 197–200 and Thr-317; that span reads RKGK. Residues 393-395, 417-422, Asp-510, and Arg-525 contribute to the ATP site; these read GEP and DTWWQT. Ser-533 is a CoA binding site. Arg-536 contacts ATP. His-549 and Val-552 together coordinate Mg(2+). Lys-623 bears the N6-acetyllysine mark.

It belongs to the ATP-dependent AMP-binding enzyme family. The cofactor is Mg(2+). Post-translationally, acetylated. Deacetylation by the SIR2-homolog deacetylase activates the enzyme.

The catalysed reaction is acetate + ATP + CoA = acetyl-CoA + AMP + diphosphate. Catalyzes the conversion of acetate into acetyl-CoA (AcCoA), an essential intermediate at the junction of anabolic and catabolic pathways. AcsA undergoes a two-step reaction. In the first half reaction, AcsA combines acetate with ATP to form acetyl-adenylate (AcAMP) intermediate. In the second half reaction, it can then transfer the acetyl group from AcAMP to the sulfhydryl group of CoA, forming the product AcCoA. The sequence is that of Acetyl-coenzyme A synthetase from Helicobacter pylori (strain P12).